The sequence spans 324 residues: Lactonase drp35 (324 aa).

Ca(2+) is bound by residues E47, S109, G111, D129, T132, Y134, D137, N184, D235, and S236. D235 (proton donor) is an active-site residue.

This sequence belongs to the SMP-30/CGR1 family. The cofactor is Ca(2+).

It localises to the cytoplasm. Functionally, exhibits lactonase activity. Acts in cells with perturbed membrane integrity and is possibly related to the membrane homeostasis. This Staphylococcus aureus (strain MRSA252) protein is Lactonase drp35 (drp35).